A 92-amino-acid chain; its full sequence is Small ribosomal subunit protein uS19 (92 aa).

The protein belongs to the universal ribosomal protein uS19 family.

In terms of biological role, protein S19 forms a complex with S13 that binds strongly to the 16S ribosomal RNA. The polypeptide is Small ribosomal subunit protein uS19 (Variovorax paradoxus (strain S110)).